A 312-amino-acid polypeptide reads, in one-letter code: Methionyl-tRNA formyltransferase (312 aa).

(6S)-5,6,7,8-tetrahydrofolate is bound at residue 109–112; it reads SLLP.

Belongs to the Fmt family.

It catalyses the reaction L-methionyl-tRNA(fMet) + (6R)-10-formyltetrahydrofolate = N-formyl-L-methionyl-tRNA(fMet) + (6S)-5,6,7,8-tetrahydrofolate + H(+). In terms of biological role, attaches a formyl group to the free amino group of methionyl-tRNA(fMet). The formyl group appears to play a dual role in the initiator identity of N-formylmethionyl-tRNA by promoting its recognition by IF2 and preventing the misappropriation of this tRNA by the elongation apparatus. This is Methionyl-tRNA formyltransferase from Anaeromyxobacter dehalogenans (strain 2CP-C).